The primary structure comprises 497 residues: Glycerol kinase (497 aa).

Threonine 11 lines the ADP pocket. ATP-binding residues include threonine 11, serine 12, and serine 13. Threonine 11 provides a ligand contact to sn-glycerol 3-phosphate. Position 15 (arginine 15) interacts with ADP. Residues arginine 81, glutamate 82, tyrosine 133, and aspartate 242 each contribute to the sn-glycerol 3-phosphate site. The glycerol site is built by arginine 81, glutamate 82, tyrosine 133, aspartate 242, and glutamine 243. Residues threonine 264 and glycine 307 each contribute to the ADP site. Residues threonine 264, glycine 307, glutamine 311, and glycine 412 each coordinate ATP. ADP is bound by residues glycine 412 and asparagine 416.

Belongs to the FGGY kinase family.

The enzyme catalyses glycerol + ATP = sn-glycerol 3-phosphate + ADP + H(+). The protein operates within polyol metabolism; glycerol degradation via glycerol kinase pathway; sn-glycerol 3-phosphate from glycerol: step 1/1. With respect to regulation, inhibited by fructose 1,6-bisphosphate (FBP). In terms of biological role, key enzyme in the regulation of glycerol uptake and metabolism. Catalyzes the phosphorylation of glycerol to yield sn-glycerol 3-phosphate. This Variovorax paradoxus (strain S110) protein is Glycerol kinase.